The following is a 178-amino-acid chain: Large ribosomal subunit protein uL6 (178 aa).

The protein belongs to the universal ribosomal protein uL6 family. In terms of assembly, part of the 50S ribosomal subunit.

Its function is as follows. This protein binds to the 23S rRNA, and is important in its secondary structure. It is located near the subunit interface in the base of the L7/L12 stalk, and near the tRNA binding site of the peptidyltransferase center. The protein is Large ribosomal subunit protein uL6 of Streptococcus suis (strain 05ZYH33).